A 913-amino-acid chain; its full sequence is Protein translocase subunit SecA (913 aa).

ATP contacts are provided by residues Q87, 105-109, and D512; that span reads GEGKT. Residues C897, C899, C908, and H909 each coordinate Zn(2+).

Belongs to the SecA family. Monomer and homodimer. Part of the essential Sec protein translocation apparatus which comprises SecA, SecYEG and auxiliary proteins SecDF-YajC and YidC. Requires Zn(2+) as cofactor.

The protein localises to the cell inner membrane. It is found in the cytoplasm. It carries out the reaction ATP + H2O + cellular proteinSide 1 = ADP + phosphate + cellular proteinSide 2.. In terms of biological role, part of the Sec protein translocase complex. Interacts with the SecYEG preprotein conducting channel. Has a central role in coupling the hydrolysis of ATP to the transfer of proteins into and across the cell membrane, serving both as a receptor for the preprotein-SecB complex and as an ATP-driven molecular motor driving the stepwise translocation of polypeptide chains across the membrane. The polypeptide is Protein translocase subunit SecA (Pseudomonas syringae pv. syringae (strain B728a)).